The primary structure comprises 430 residues: Enolase (430 aa).

Glutamine 167 is a (2R)-2-phosphoglycerate binding site. Glutamate 209 (proton donor) is an active-site residue. Positions 245, 286, and 313 each coordinate Mg(2+). Residues lysine 338, arginine 367, serine 368, and lysine 389 each contribute to the (2R)-2-phosphoglycerate site. The Proton acceptor role is filled by lysine 338.

It belongs to the enolase family. Mg(2+) is required as a cofactor.

Its subcellular location is the cytoplasm. It localises to the secreted. It is found in the cell surface. It carries out the reaction (2R)-2-phosphoglycerate = phosphoenolpyruvate + H2O. It functions in the pathway carbohydrate degradation; glycolysis; pyruvate from D-glyceraldehyde 3-phosphate: step 4/5. Its function is as follows. Catalyzes the reversible conversion of 2-phosphoglycerate (2-PG) into phosphoenolpyruvate (PEP). It is essential for the degradation of carbohydrates via glycolysis. The polypeptide is Enolase (Synechococcus sp. (strain CC9902)).